The chain runs to 237 residues: Ribosomal RNA small subunit methyltransferase G (237 aa).

S-adenosyl-L-methionine contacts are provided by residues glycine 78, phenylalanine 83, 129–130, and arginine 148; that span reads AE. Positions 216–237 are disordered; that stretch reads SKKKETPNKYPRKAGTPNKKPL.

Belongs to the methyltransferase superfamily. RNA methyltransferase RsmG family.

It localises to the cytoplasm. In terms of biological role, specifically methylates the N7 position of a guanine in 16S rRNA. This chain is Ribosomal RNA small subunit methyltransferase G, found in Streptococcus agalactiae serotype III (strain NEM316).